Consider the following 283-residue polypeptide: Probable voltage-dependent anion-selective channel (283 aa).

This sequence belongs to the eukaryotic mitochondrial porin family.

It is found in the mitochondrion outer membrane. Its function is as follows. Forms a channel through the cell membrane that allows diffusion of small hydrophilic molecules. Plays a role in maintaining mitochondrial morphology. This is Probable voltage-dependent anion-selective channel from Caenorhabditis elegans.